Here is a 901-residue protein sequence, read N- to C-terminus: Glutamate receptor 2.1 (901 aa).

Positions 1–25 (MKRENNLVLSLLFFVIVFLMQVGEA) are cleaved as a signal peptide. Residues 26-574 (QNRITNVNVG…SSTIFLMPLT (549 aa)) lie on the Extracellular side of the membrane. 9 N-linked (GlcNAc...) asparagine glycosylation sites follow: Asn-46, Asn-53, Asn-204, Asn-267, Asn-331, Asn-342, Asn-461, Asn-477, and Asn-536. The chain crosses the membrane as a helical span at residues 575 to 595 (LALWLISLLSFFIIGLVVWVL). Residues 596 to 604 (EHRVNPDFD) lie on the Cytoplasmic side of the membrane. A helical transmembrane segment spans residues 605–625 (GPGQYQLSTIFWFSFSIMVFA). The Cytoplasmic portion of the chain corresponds to 626–629 (PRER). A helical transmembrane segment spans residues 630–650 (VLSFWARVVVIIWYFLVLVLT). The Extracellular segment spans residues 651 to 823 (QSYTASLASL…VSFRQLGFDS (173 aa)). The chain crosses the membrane as a helical span at residues 824–844 (FWVLFLVAAIVCTMALLKFVY). The Cytoplasmic segment spans residues 845-901 (QFLKENPNQRNLRVLWEKFNEPDQKSYIKDVTKCQCSSGQGMPKNGQEGANAVNNGN).

This sequence belongs to the glutamate-gated ion channel (TC 1.A.10.1) family. In terms of assembly, may form heteromers. Expressed predominantly in roots. First strongly detected in all cell types of the root except at the apex. Later expressed at the root-shoot junction.

The protein resides in the membrane. In terms of biological role, glutamate-gated receptor that probably acts as a non-selective cation channel. May be involved in light-signal transduction and calcium homeostasis via the regulation of calcium influx into cells. This chain is Glutamate receptor 2.1 (GLR2.1), found in Arabidopsis thaliana (Mouse-ear cress).